Here is a 494-residue protein sequence, read N- to C-terminus: UDP-N-acetylmuramoyl-L-alanyl-D-glutamate--L-lysine ligase (494 aa).

Ser30 provides a ligand contact to UDP-N-acetyl-alpha-D-muramoyl-L-alanyl-D-glutamate. 110 to 116 (GTNGKTS) is an ATP binding site. UDP-N-acetyl-alpha-D-muramoyl-L-alanyl-D-glutamate-binding positions include 152–153 (TT), Ser179, and Arg187. Lys219 is modified (N6-carboxylysine). An L-lysine recognition motif motif is present at residues 406–409 (DNPA).

This sequence belongs to the MurCDEF family. MurE subfamily. Post-translationally, carboxylation is probably crucial for Mg(2+) binding and, consequently, for the gamma-phosphate positioning of ATP.

Its subcellular location is the cytoplasm. The enzyme catalyses UDP-N-acetyl-alpha-D-muramoyl-L-alanyl-D-glutamate + L-lysine + ATP = UDP-N-acetyl-alpha-D-muramoyl-L-alanyl-gamma-D-glutamyl-L-lysine + ADP + phosphate + H(+). Its pathway is cell wall biogenesis; peptidoglycan biosynthesis. In terms of biological role, catalyzes the addition of L-lysine to the nucleotide precursor UDP-N-acetylmuramoyl-L-alanyl-D-glutamate (UMAG) in the biosynthesis of bacterial cell-wall peptidoglycan. The chain is UDP-N-acetylmuramoyl-L-alanyl-D-glutamate--L-lysine ligase from Staphylococcus epidermidis (strain ATCC 35984 / DSM 28319 / BCRC 17069 / CCUG 31568 / BM 3577 / RP62A).